A 447-amino-acid polypeptide reads, in one-letter code: GTPase Der (447 aa).

2 EngA-type G domains span residues 4–165 (QIIT…PEEE) and 180–357 (LQIV…KIWN). GTP-binding positions include 10-17 (GRPNVGKS), 57-61 (DTPGL), 119-122 (NKCE), 186-193 (GRPNAGKS), 233-237 (DTAGL), and 298-301 (NKWD). The KH-like domain maps to 358–443 (KKITTSKLNE…PIRFTYVKTK (86 aa)).

This sequence belongs to the TRAFAC class TrmE-Era-EngA-EngB-Septin-like GTPase superfamily. EngA (Der) GTPase family. Associates with the 50S ribosomal subunit.

GTPase that plays an essential role in the late steps of ribosome biogenesis. The sequence is that of GTPase Der from Rickettsia rickettsii (strain Iowa).